A 436-amino-acid polypeptide reads, in one-letter code: 3-oxo-tetronate kinase (436 aa).

Residues S272, 372–375 (GGET), and G415 each bind ATP.

The protein belongs to the four-carbon acid sugar kinase family.

The enzyme catalyses 3-dehydro-L-erythronate + ATP = 3-dehydro-4-O-phospho-L-erythronate + ADP + H(+). The catalysed reaction is 3-dehydro-D-erythronate + ATP = 3-dehydro-4-O-phospho-D-erythronate + ADP + H(+). Functionally, catalyzes the ATP-dependent phosphorylation of 3-oxo-tetronate to 3-oxo-tetronate 4-phosphate. This Brucella melitensis biotype 1 (strain ATCC 23456 / CCUG 17765 / NCTC 10094 / 16M) protein is 3-oxo-tetronate kinase.